The following is a 543-amino-acid chain: Tyrosine-protein kinase Yes (543 aa).

A compositionally biased stretch (basic and acidic residues) spans Met-1 to Asn-20. Residues Met-1 to Ser-45 are disordered. Gly-2 carries N-myristoyl glycine lipidation. A lipid anchor (S-palmitoyl cysteine; in membrane form) is attached at Cys-3. A Phosphothreonine modification is found at Thr-21. The residue at position 32 (Tyr-32) is a Phosphotyrosine. Phosphoserine is present on Ser-40. The region spanning Gly-91–Ser-152 is the SH3 domain. The SH2 domain maps to Trp-158–Cys-255. The Protein kinase domain maps to Leu-277–Phe-530. Residues Leu-283–Val-291 and Lys-305 each bind ATP. 2 positions are modified to phosphotyrosine: Tyr-336 and Tyr-345. Asp-396 acts as the Proton acceptor in catalysis. Position 426 is a phosphotyrosine; by autocatalysis (Tyr-426). Phosphotyrosine is present on Tyr-446. Position 537 is a phosphotyrosine; by CSK (Tyr-537).

The protein belongs to the protein kinase superfamily. Tyr protein kinase family. SRC subfamily. Interacts with YAP1 and CSF1R. Interacts with CTNND1; this interaction allows YES1-mediated activation of FYN and FER and subsequent phosphorylation of CTNND1. Interacts with FASLG. Interacts with IL6ST/gp130. Interacts with SCRIB, when YES1 is in a closed conformation; the interaction facilitates YES1 autophosphorylation. In terms of processing, phosphorylated. Phosphorylation by CSK on the C-terminal tail maintains the enzyme in an inactive state. Autophosphorylation at Tyr-426 maintains enzyme activity by blocking CSK-mediated inhibition. Palmitoylation at Cys-3 promotes membrane localization. As to expression, expressed in the epithelial cells of renal proximal tubules and stomach as well as hematopoietic cells in the bone marrow and spleen in the fetal tissues. In adult, expressed in epithelial cells of the renal proximal tubules and present in keratinocytes in the basal epidermal layer of epidermis.

The protein localises to the cell membrane. Its subcellular location is the cytoplasm. It localises to the cytoskeleton. The protein resides in the microtubule organizing center. It is found in the centrosome. The protein localises to the cytosol. Its subcellular location is the cell junction. The catalysed reaction is L-tyrosyl-[protein] + ATP = O-phospho-L-tyrosyl-[protein] + ADP + H(+). Functionally, non-receptor protein tyrosine kinase that is involved in the regulation of cell growth and survival, apoptosis, cell-cell adhesion, cytoskeleton remodeling, and differentiation. Stimulation by receptor tyrosine kinases (RTKs) including EGFR, PDGFR, CSF1R and FGFR leads to recruitment of YES1 to the phosphorylated receptor, and activation and phosphorylation of downstream substrates. Upon EGFR activation, promotes the phosphorylation of PARD3 to favor epithelial tight junction assembly. Participates in the phosphorylation of specific junctional components such as CTNND1 by stimulating the FYN and FER tyrosine kinases at cell-cell contacts. Upon T-cell stimulation by CXCL12, phosphorylates collapsin response mediator protein 2/DPYSL2 and induces T-cell migration. Participates in CD95L/FASLG signaling pathway and mediates AKT-mediated cell migration. Plays a role in cell cycle progression by phosphorylating the cyclin-dependent kinase 4/CDK4 thus regulating the G1 phase. Also involved in G2/M progression and cytokinesis. Catalyzes phosphorylation of organic cation transporter OCT2 which induces its transport activity. This is Tyrosine-protein kinase Yes (YES1) from Homo sapiens (Human).